The sequence spans 217 residues: N-(5'-phosphoribosyl)anthranilate isomerase (217 aa).

It belongs to the TrpF family.

It carries out the reaction N-(5-phospho-beta-D-ribosyl)anthranilate = 1-(2-carboxyphenylamino)-1-deoxy-D-ribulose 5-phosphate. The protein operates within amino-acid biosynthesis; L-tryptophan biosynthesis; L-tryptophan from chorismate: step 3/5. This Synechococcus sp. (strain ATCC 27144 / PCC 6301 / SAUG 1402/1) (Anacystis nidulans) protein is N-(5'-phosphoribosyl)anthranilate isomerase.